The sequence spans 149 residues: Transcriptional repressor NrdR (149 aa).

A zinc finger lies at 3-34 (CPFCSATDTKVIDSRLVADGHQVRRRRECAEC). One can recognise an ATP-cone domain in the interval 49–139 (PRVVKQDGSR…VYRAFEDVSE (91 aa)).

Belongs to the NrdR family. Requires Zn(2+) as cofactor.

Functionally, negatively regulates transcription of bacterial ribonucleotide reductase nrd genes and operons by binding to NrdR-boxes. In Shewanella woodyi (strain ATCC 51908 / MS32), this protein is Transcriptional repressor NrdR.